The chain runs to 125 residues: Small ribosomal subunit protein bS6 (125 aa).

Residues 94–125 (KAETGASSMMKTVEREEARKASQAEFAASNER) are disordered. Residues 105-115 (TVEREEARKAS) are compositionally biased toward basic and acidic residues.

This sequence belongs to the bacterial ribosomal protein bS6 family.

Binds together with bS18 to 16S ribosomal RNA. This Acidovorax ebreus (strain TPSY) (Diaphorobacter sp. (strain TPSY)) protein is Small ribosomal subunit protein bS6.